We begin with the raw amino-acid sequence, 88 residues long: Monensin polyketide synthase acyl carrier protein (88 aa).

Residues 5–82 form the Carrier domain; it reads PFTLADLQRI…ELIDHVNERL (78 aa). The residue at position 42 (Ser42) is an O-(pantetheine 4'-phosphoryl)serine.

4'-phosphopantetheine is transferred from CoA to a specific serine of the apo-ACP-like protein.

It functions in the pathway antifungal biosynthesis; monensin biosynthesis. In terms of biological role, acyl carrier protein. The protein is Monensin polyketide synthase acyl carrier protein of Streptomyces virginiae (Streptomyces cinnamonensis).